The sequence spans 834 residues: 1,4-alpha-glucan branching enzyme GlgB (834 aa).

Aspartate 511 (nucleophile) is an active-site residue. The Proton donor role is filled by glutamate 565.

Belongs to the glycosyl hydrolase 13 family. GlgB subfamily. Monomer.

The catalysed reaction is Transfers a segment of a (1-&gt;4)-alpha-D-glucan chain to a primary hydroxy group in a similar glucan chain.. It functions in the pathway glycan biosynthesis; glycogen biosynthesis. In terms of biological role, catalyzes the formation of the alpha-1,6-glucosidic linkages in glycogen by scission of a 1,4-alpha-linked oligosaccharide from growing alpha-1,4-glucan chains and the subsequent attachment of the oligosaccharide to the alpha-1,6 position. This Burkholderia thailandensis (strain ATCC 700388 / DSM 13276 / CCUG 48851 / CIP 106301 / E264) protein is 1,4-alpha-glucan branching enzyme GlgB (glgB).